Reading from the N-terminus, the 982-residue chain is Serine/threonine-protein kinase PknD (982 aa).

Residues 51 to 342 (YQIIKSIGKG…ELIRDIENYL (292 aa)) form the Protein kinase domain. ATP is bound by residues 57 to 65 (IGKGGMGEV) and Lys-80. Asp-186 (proton acceptor) is an active-site residue.

Belongs to the protein kinase superfamily. Ser/Thr protein kinase family. Autophosphorylated on serine and threonine residues.

It carries out the reaction L-seryl-[protein] + ATP = O-phospho-L-seryl-[protein] + ADP + H(+). The enzyme catalyses L-threonyl-[protein] + ATP = O-phospho-L-threonyl-[protein] + ADP + H(+). Functionally, together with the serine/threonine kinase Pkn1, may play a role in the specific interactions with host proteins during intracellular growth. In Protochlamydia amoebophila (strain UWE25), this protein is Serine/threonine-protein kinase PknD.